Reading from the N-terminus, the 279-residue chain is Pantothenate synthetase (279 aa).

26–33 provides a ligand contact to ATP; the sequence is MGNLHEGH. The Proton donor role is filled by His-33. Residue Gln-57 coordinates (R)-pantoate. Gln-57 contributes to the beta-alanine binding site. Residue 144–147 participates in ATP binding; the sequence is GKKD. Gln-150 is a binding site for (R)-pantoate. Residues Val-173 and 181–184 each bind ATP; that span reads LSSR.

Belongs to the pantothenate synthetase family. Homodimer.

The protein resides in the cytoplasm. The catalysed reaction is (R)-pantoate + beta-alanine + ATP = (R)-pantothenate + AMP + diphosphate + H(+). Its pathway is cofactor biosynthesis; (R)-pantothenate biosynthesis; (R)-pantothenate from (R)-pantoate and beta-alanine: step 1/1. Its function is as follows. Catalyzes the condensation of pantoate with beta-alanine in an ATP-dependent reaction via a pantoyl-adenylate intermediate. The sequence is that of Pantothenate synthetase from Burkholderia orbicola (strain MC0-3).